Reading from the N-terminus, the 213-residue chain is Orotate phosphoribosyltransferase (213 aa).

Residue Lys26 participates in 5-phospho-alpha-D-ribose 1-diphosphate binding. An orotate-binding site is contributed by 34 to 35 (FF). 5-phospho-alpha-D-ribose 1-diphosphate-binding positions include 72–73 (YK), Arg99, Lys100, Lys103, His105, and 124–132 (DDVITAGTA). Thr128 and Arg156 together coordinate orotate.

Belongs to the purine/pyrimidine phosphoribosyltransferase family. PyrE subfamily. Homodimer. Mg(2+) serves as cofactor.

The catalysed reaction is orotidine 5'-phosphate + diphosphate = orotate + 5-phospho-alpha-D-ribose 1-diphosphate. The protein operates within pyrimidine metabolism; UMP biosynthesis via de novo pathway; UMP from orotate: step 1/2. Functionally, catalyzes the transfer of a ribosyl phosphate group from 5-phosphoribose 1-diphosphate to orotate, leading to the formation of orotidine monophosphate (OMP). The chain is Orotate phosphoribosyltransferase from Klebsiella pneumoniae (strain 342).